The following is a 228-amino-acid chain: 2,3-bisphosphoglycerate-dependent phosphoglycerate mutase (228 aa).

Substrate-binding positions include 8 to 15, 21 to 22, Arg60, 87 to 90, Lys98, 114 to 115, and 180 to 181; these read RHGQSQWN, TG, ERHY, RR, and GN. Catalysis depends on His9, which acts as the Tele-phosphohistidine intermediate. Glu87 serves as the catalytic Proton donor/acceptor.

It belongs to the phosphoglycerate mutase family. BPG-dependent PGAM subfamily. Homodimer.

It carries out the reaction (2R)-2-phosphoglycerate = (2R)-3-phosphoglycerate. It functions in the pathway carbohydrate degradation; glycolysis; pyruvate from D-glyceraldehyde 3-phosphate: step 3/5. Functionally, catalyzes the interconversion of 2-phosphoglycerate and 3-phosphoglycerate. The protein is 2,3-bisphosphoglycerate-dependent phosphoglycerate mutase of Sphingopyxis alaskensis (strain DSM 13593 / LMG 18877 / RB2256) (Sphingomonas alaskensis).